The following is a 1065-amino-acid chain: Outer capsid protein VP3 (1065 aa).

Its subcellular location is the virion. The enzyme catalyses a 5'-end diphospho-ribonucleoside in mRNA + GTP + H(+) = a 5'-end (5'-triphosphoguanosine)-ribonucleoside in mRNA + diphosphate. It catalyses the reaction a 5'-end (5'-triphosphoguanosine)-ribonucleoside in mRNA + S-adenosyl-L-methionine = a 5'-end (N(7)-methyl 5'-triphosphoguanosine)-ribonucleoside in mRNA + S-adenosyl-L-homocysteine. In terms of biological role, outer capsid protein involved in mRNA capping. Catalyzes the last 3 enzymatic activities for formation of the 5' cap structure on the viral plus-strand transcripts, namely the RNA guanylyltransferase, RNA-7N- and RNA-2'O-methyltransferase activities. The protein is Outer capsid protein VP3 (S3) of Cryphonectria parasitica mycoreovirus 1 (strain 9B21) (CpMYRV-1).